The following is a 675-amino-acid chain: DNA ligase (675 aa).

NAD(+)-binding positions include 34 to 38 (DYAFD), 83 to 84 (SL), and Glu117. Residue Lys119 is the N6-AMP-lysine intermediate of the active site. 4 residues coordinate NAD(+): Arg140, Glu184, Lys297, and Lys321. Zn(2+) contacts are provided by Cys415, Cys418, Cys433, and Cys439. The 78-residue stretch at 598-675 (LVNRNFEGMK…GEEEFEAMLF (78 aa)) folds into the BRCT domain.

It belongs to the NAD-dependent DNA ligase family. LigA subfamily. Requires Mg(2+) as cofactor. The cofactor is Mn(2+).

It carries out the reaction NAD(+) + (deoxyribonucleotide)n-3'-hydroxyl + 5'-phospho-(deoxyribonucleotide)m = (deoxyribonucleotide)n+m + AMP + beta-nicotinamide D-nucleotide.. DNA ligase that catalyzes the formation of phosphodiester linkages between 5'-phosphoryl and 3'-hydroxyl groups in double-stranded DNA using NAD as a coenzyme and as the energy source for the reaction. It is essential for DNA replication and repair of damaged DNA. This is DNA ligase from Prosthecochloris aestuarii (strain DSM 271 / SK 413).